Here is a 137-residue protein sequence, read N- to C-terminus: Phosphoribosyl-AMP cyclohydrolase (137 aa).

D84 contributes to the Mg(2+) binding site. C85 contributes to the Zn(2+) binding site. Mg(2+) is bound by residues D86 and D88. Residues C101 and C108 each coordinate Zn(2+).

This sequence belongs to the PRA-CH family. As to quaternary structure, homodimer. Mg(2+) serves as cofactor. Zn(2+) is required as a cofactor.

The protein resides in the cytoplasm. It carries out the reaction 1-(5-phospho-beta-D-ribosyl)-5'-AMP + H2O = 1-(5-phospho-beta-D-ribosyl)-5-[(5-phospho-beta-D-ribosylamino)methylideneamino]imidazole-4-carboxamide. It functions in the pathway amino-acid biosynthesis; L-histidine biosynthesis; L-histidine from 5-phospho-alpha-D-ribose 1-diphosphate: step 3/9. Catalyzes the hydrolysis of the adenine ring of phosphoribosyl-AMP. This chain is Phosphoribosyl-AMP cyclohydrolase, found in Chlorobaculum parvum (strain DSM 263 / NCIMB 8327) (Chlorobium vibrioforme subsp. thiosulfatophilum).